We begin with the raw amino-acid sequence, 269 residues long: Phosphatidylglycerol--prolipoprotein diacylglyceryl transferase (269 aa).

Transmembrane regions (helical) follow at residues 14-34 (IVQI…AGII), 49-69 (VAPE…IPMA), 89-109 (VFAI…GLLA), and 118-138 (GYSL…GQAI). Arg-140 lines the a 1,2-diacyl-sn-glycero-3-phospho-(1'-sn-glycerol) pocket. 3 helical membrane passes run 180-200 (TFLY…FVFF), 208-228 (GSIA…IEGL), and 240-260 (TAQL…WWLN).

Belongs to the Lgt family.

It is found in the cell inner membrane. The enzyme catalyses L-cysteinyl-[prolipoprotein] + a 1,2-diacyl-sn-glycero-3-phospho-(1'-sn-glycerol) = an S-1,2-diacyl-sn-glyceryl-L-cysteinyl-[prolipoprotein] + sn-glycerol 1-phosphate + H(+). The protein operates within protein modification; lipoprotein biosynthesis (diacylglyceryl transfer). Catalyzes the transfer of the diacylglyceryl group from phosphatidylglycerol to the sulfhydryl group of the N-terminal cysteine of a prolipoprotein, the first step in the formation of mature lipoproteins. This chain is Phosphatidylglycerol--prolipoprotein diacylglyceryl transferase, found in Gloeobacter violaceus (strain ATCC 29082 / PCC 7421).